A 379-amino-acid polypeptide reads, in one-letter code: Putative clathrin assembly protein At1g68110 (379 aa).

The ENTH domain maps to 26–158 (NSSYRNADLE…SFLSDQIHRL (133 aa)).

The protein localises to the membrane. The protein resides in the clathrin-coated pit. Its subcellular location is the golgi apparatus. It localises to the cytoplasmic vesicle. It is found in the clathrin-coated vesicle. This chain is Putative clathrin assembly protein At1g68110, found in Arabidopsis thaliana (Mouse-ear cress).